Here is a 512-residue protein sequence, read N- to C-terminus: MLTMGTALSQQVDANWQTYIMIAVYFLILIVIGFYGYKQATGNLSEYMLGGRSIGPYITALSAGASDMSGWMIMELPGSVYSTGLSAMWITIGLTLGAYINYFVVAPRLRVYTELAGDAITLPDFFKNRLNDKNNVLKIISGLIIVVFFTLYTHSGFVSGGKLFESAFGLDYHFGLILVAFIVIFYTFFGGYLAVSITDFFQGVIMLIAMVMVPIVAMMNLNGWGTFHDVAAMKPTNLNLFKGLSFIGIISLFSWGLGYFGQPHIIVRFMSIKSHKMLPKARRLGISWMAVGLLGAVAVGLTGIAFVPAYHIKLEDPETLFIVMSQVLFHPLVGGFLLAAILAAIMSTISSQLLVTSSSLTEDFYKLIRGEEKAKTHQKEFVMIGRLSVLVVAIVAIAIAWNPNDTILNLVGNAWAGFGASFSPLVLFALYWKGLTRAGAVSGMVSGALVVIVWIAWIKPLAHINEIFGLYEIIPGFIVSVIVTYVVSKLTKKPGAFVETDLNKVRDIVREK.

13 helical membrane passes run 16-36 (WQTYIMIAVYFLILIVIGFYG), 54-74 (IGPYITALSAGASDMSGWMIM), 85-105 (LSAMWITIGLTLGAYINYFVV), 139-159 (IISGLIIVVFFTLYTHSGFVS), 174-194 (FGLILVAFIVIFYTFFGGYLA), 200-220 (FFQGVIMLIAMVMVPIVAMMN), 240-260 (LFKGLSFIGIISLFSWGLGYF), 286-306 (ISWMAVGLLGAVAVGLTGIAF), 327-347 (VLFHPLVGGFLLAAILAAIMS), 381-401 (FVMIGRLSVLVVAIVAIAIAW), 410-430 (LVGNAWAGFGASFSPLVLFAL), 438-458 (AGAVSGMVSGALVVIVWIAWI), and 467-487 (IFGLYEIIPGFIVSVIVTYVV).

Belongs to the sodium:solute symporter (SSF) (TC 2.A.21) family.

It is found in the cell membrane. It catalyses the reaction L-proline(in) + Na(+)(in) = L-proline(out) + Na(+)(out). Its function is as follows. Catalyzes the sodium-dependent uptake of extracellular L-proline. Since most S.aureus strains are L-proline auxotrophs, this transporter may aid the bacterial persistence during an infection of tissues with low proline concentrations. The protein is Sodium/proline symporter (putP) of Staphylococcus aureus (strain Newman).